Reading from the N-terminus, the 339-residue chain is uncharacterized protein (339 aa).

This is an uncharacterized protein from Treponema pallidum (strain Nichols).